Reading from the N-terminus, the 226-residue chain is Putative ABC transporter ATP-binding protein DR_2469 (226 aa).

In terms of domain architecture, ABC transporter spans 2–225 (IELRHVSHHY…LRVYRERMTW (224 aa)). An ATP-binding site is contributed by 33-40 (GSNGSGKS).

This sequence belongs to the ABC transporter superfamily.

The protein resides in the cell membrane. In terms of biological role, probably part of an ABC transporter complex. Responsible for energy coupling to the transport system. This chain is Putative ABC transporter ATP-binding protein DR_2469, found in Deinococcus radiodurans (strain ATCC 13939 / DSM 20539 / JCM 16871 / CCUG 27074 / LMG 4051 / NBRC 15346 / NCIMB 9279 / VKM B-1422 / R1).